The following is a 272-amino-acid chain: MRIMASHDTPVSPAGILIDLDGTVFRGNELIEGAREAIKTLRRMGKKIVFLSNRGNISRAMCRKKLLGAGIETDVNDIVLSSSVTAAFLKKHYRFSKVWVLGEQGLVDELRLAGVQNASEPKEADWLVISLHETLTYDDLNQAFQAAAGGARIIATNKDRSFPNEDGNAIDVAGMIGAIETSAQAKTELVVGKPSWLMAEAACTAMGLSAHECMIIGDSIESDIAMGKLYGMKSALVLTGSAKQGEQRLYTPDYVLDSIKDVTKLAEEGILI.

The protein belongs to the HAD-like hydrolase superfamily. Mg(2+) is required as a cofactor.

It catalyses the reaction sugar phosphate + H2O = sugar + phosphate.. The enzyme catalyses O-phospho-L-serine + H2O = L-serine + phosphate. It carries out the reaction O-phospho-D-serine + H2O = D-serine + phosphate. Its function is as follows. Catalyzes the dephosphorylation of C5 and C6 carbon sugars in vitro. Catalyzes the dephosphorylation of 3'-AMP and phosphoserine in vitro. This Bacillus subtilis (strain 168) protein is Sugar-phosphatase AraL (araL).